Consider the following 126-residue polypeptide: Large ribosomal subunit protein eL28 (126 aa).

S2 is modified (N-acetylserine).

It belongs to the eukaryotic ribosomal protein eL28 family.

In Caenorhabditis elegans, this protein is Large ribosomal subunit protein eL28 (rpl-28).